Reading from the N-terminus, the 285-residue chain is 4-hydroxybenzoate octaprenyltransferase (285 aa).

Helical transmembrane passes span 19-39, 42-62, 82-102, 104-124, 136-156, 166-186, 210-230, 233-253, and 265-285; these read IGSLLLLWPTLWALFLAADGL, WHVLIVFVLGVVFMRSAGCVI, LPSGLISSKEALSLFAVLVVC, FLLVLTMNTLTIMLSGIGIVL, YLPQFVLGLAFSWAIPMAYAA, WLLFVINALWTIAYDTQYAMV, IIGLLQLSVLALLIVLGSQLA, GIYYWGILAAAGFFVYQQWLI, and FLNNNYVGGLIFIAISASVLI.

The protein belongs to the UbiA prenyltransferase family. The cofactor is Mg(2+).

Its subcellular location is the cell inner membrane. It carries out the reaction all-trans-octaprenyl diphosphate + 4-hydroxybenzoate = 4-hydroxy-3-(all-trans-octaprenyl)benzoate + diphosphate. It functions in the pathway cofactor biosynthesis; ubiquinone biosynthesis. Catalyzes the prenylation of para-hydroxybenzoate (PHB) with an all-trans polyprenyl group. Mediates the second step in the final reaction sequence of ubiquinone-8 (UQ-8) biosynthesis, which is the condensation of the polyisoprenoid side chain with PHB, generating the first membrane-bound Q intermediate 3-octaprenyl-4-hydroxybenzoate. This Aliivibrio fischeri (strain ATCC 700601 / ES114) (Vibrio fischeri) protein is 4-hydroxybenzoate octaprenyltransferase.